We begin with the raw amino-acid sequence, 299 residues long: pH-regulated antigen PRA1 (299 aa).

An N-terminal signal peptide occupies residues 1–15 (MNYLLFCLFFAFSVA). N-linked (GlcNAc...) asparagine glycosylation is found at Asn48, Asn89, Asn135, and Asn208. The disordered stretch occupies residues 253 to 299 (FEDSDSGSDSGASSTASSSHQHTDSNPSATTDANSHCHTHADGEVHC). The span at 259–272 (GSDSGASSTASSSH) shows a compositional bias: low complexity. Residues 278–288 (NPSATTDANSH) show a composition bias toward polar residues.

The protein belongs to the ZPS1 family. As to quaternary structure, component of a multiprotein complex of 250 kDa composed of at least HYR1, MP65, and PRA1. Interacts with host Integrin alpha-M/beta-2 heterodimer. Also binds human factor H (CFH), CFHR1, plasminogen (PLG), complement C3, and C4BPA. Interacts with ZRT101. In terms of processing, N- and O-glycosylated. The N- and 0-glycosidically linked carbohydrates represent 18 to 20 percent and 3 to 4 percent, respectively, of the molecular mass of PRA1. 0-linked sugar residues may be involved in the interaction with fibrinogen. Contributes highly to the carbohydrate component of the matrix. Treatment with tunicamycin impairs glycosylation.

The protein resides in the secreted. In terms of biological role, cell surface protein involved in the host-parasite interaction during candidal infection. With MP65, represents a major component of the biofilm matrix. As a surface protein, binds the two human complement regulators CFH and CFHR1, as well as plasminogen PLG, mediates complement evasion and extra-cellular matrix interaction and/or degradation. As a released protein, enhances complement control in direct vicinity of the yeast and thus generates an additional protective layer which controls host complement attack, assisting the fungus in escaping host surveillance. Binds to host fluid-phase C3 and blocks cleavage of C3 to C3a and C3b, leading to inhibition of complement activation and protection from uptake of C.albicans by human macrophages. Also mediates human complement control and complement evasion through binding to C4BPA, another human complement inhibitor, as well as through binding to host integrin alpha-M/beta-2. Binds zinc from its environment and then reassociates with ZRT1 to acquire this essential metal. This is pH-regulated antigen PRA1 from Candida albicans (strain SC5314 / ATCC MYA-2876) (Yeast).